Consider the following 193-residue polypeptide: MKLKPPMTMMDFFLKSEGTWFSQRTVHHFDSAQDESGKSNILVKVLTKDDPKVIKVCEQQKVNPALAKGGASFNWQDNLDHGEPNPNYSAILVDIPDSQTGRTGKFLRNRGYIESIPVVSRYHFTNDGVLTIDTEYEKNQGQERCWFLTDDFRVRINTVRMMNGVNLMAYCSERRCITRKQLEEIVQKNAARS.

It belongs to the CpcS/CpeS biliprotein lyase family.

Covalently attaches a chromophore to Cys residue(s) of phycobiliproteins. This is Chromophore lyase CpcS/CpeS 4 from Trichodesmium erythraeum (strain IMS101).